Here is a 375-residue protein sequence, read N- to C-terminus: Succinyl-diaminopimelate desuccinylase (375 aa).

His66 provides a ligand contact to Zn(2+). The active site involves Asp68. Asp99 contacts Zn(2+). Glu133 serves as the catalytic Proton acceptor. Zn(2+) is bound by residues Glu134, Glu162, and His348.

The protein belongs to the peptidase M20A family. DapE subfamily. As to quaternary structure, homodimer. It depends on Zn(2+) as a cofactor. Requires Co(2+) as cofactor.

It carries out the reaction N-succinyl-(2S,6S)-2,6-diaminopimelate + H2O = (2S,6S)-2,6-diaminopimelate + succinate. It participates in amino-acid biosynthesis; L-lysine biosynthesis via DAP pathway; LL-2,6-diaminopimelate from (S)-tetrahydrodipicolinate (succinylase route): step 3/3. Its function is as follows. Catalyzes the hydrolysis of N-succinyl-L,L-diaminopimelic acid (SDAP), forming succinate and LL-2,6-diaminopimelate (DAP), an intermediate involved in the bacterial biosynthesis of lysine and meso-diaminopimelic acid, an essential component of bacterial cell walls. This chain is Succinyl-diaminopimelate desuccinylase, found in Buchnera aphidicola subsp. Acyrthosiphon pisum (strain 5A).